The chain runs to 293 residues: Glutamyl-Q tRNA(Asp) synthetase (293 aa).

L-glutamate contacts are provided by residues 9–13 (RFAPS) and Glu-45. Positions 12-22 (PSPSGSLHFGS) match the 'HIGH' region motif. Residues Cys-101, Cys-103, Tyr-115, and Cys-119 each coordinate Zn(2+). Tyr-172 and Arg-190 together coordinate L-glutamate. Positions 228–232 (KLSKQ) match the 'KMSKS' region motif. Lys-231 lines the ATP pocket.

This sequence belongs to the class-I aminoacyl-tRNA synthetase family. GluQ subfamily. Requires Zn(2+) as cofactor.

Functionally, catalyzes the tRNA-independent activation of glutamate in presence of ATP and the subsequent transfer of glutamate onto a tRNA(Asp). Glutamate is transferred on the 2-amino-5-(4,5-dihydroxy-2-cyclopenten-1-yl) moiety of the queuosine in the wobble position of the QUC anticodon. In Shewanella frigidimarina (strain NCIMB 400), this protein is Glutamyl-Q tRNA(Asp) synthetase.